Consider the following 156-residue polypeptide: MNATRRQRLWWVICVLTAAALAVTLIVFALQRNMSYLFTPSQVSAGEAAGYQQFRLGGMVKAGSIQRAGDSLKVSFTVIDKNAATQVEYTGILPDLFRDNQSVIANGRMQGGRFVANEVLAKHDETYMPKELKDAMAEGHAGKPIPATATPLTAPR.

Topologically, residues 1-8 are cytoplasmic; sequence MNATRRQR. The chain crosses the membrane as a helical; Signal-anchor for type II membrane protein span at residues 9-29; that stretch reads LWWVICVLTAAALAVTLIVFA. The Periplasmic segment spans residues 30 to 156; sequence LQRNMSYLFT…ATATPLTAPR (127 aa). Residues His123 and Tyr127 each coordinate heme. The interval 137–156 is disordered; sequence AEGHAGKPIPATATPLTAPR. Residues 146–156 show a composition bias toward low complexity; sequence PATATPLTAPR.

The protein belongs to the CcmE/CycJ family.

It is found in the cell inner membrane. Its function is as follows. Heme chaperone required for the biogenesis of c-type cytochromes. Transiently binds heme delivered by CcmC and transfers the heme to apo-cytochromes in a process facilitated by CcmF and CcmH. The sequence is that of Cytochrome c-type biogenesis protein CcmE 1 from Xanthomonas euvesicatoria pv. vesicatoria (strain 85-10) (Xanthomonas campestris pv. vesicatoria).